Here is a 74-residue protein sequence, read N- to C-terminus: RNA-binding protein Hfq (74 aa).

The Sm domain occupies aspartate 9 to valine 69.

It belongs to the Hfq family. Homohexamer.

In terms of biological role, RNA chaperone that binds small regulatory RNA (sRNAs) and mRNAs to facilitate mRNA translational regulation in response to envelope stress, environmental stress and changes in metabolite concentrations. Also binds with high specificity to tRNAs. The polypeptide is RNA-binding protein Hfq (Bacillus cereus (strain Q1)).